Reading from the N-terminus, the 423-residue chain is Serine hydroxymethyltransferase (423 aa).

(6S)-5,6,7,8-tetrahydrofolate-binding positions include L120 and 124-126 (GHL). Residue K229 is modified to N6-(pyridoxal phosphate)lysine. 353 to 355 (SPF) provides a ligand contact to (6S)-5,6,7,8-tetrahydrofolate.

Belongs to the SHMT family. In terms of assembly, homodimer. Requires pyridoxal 5'-phosphate as cofactor.

It is found in the cytoplasm. The catalysed reaction is (6R)-5,10-methylene-5,6,7,8-tetrahydrofolate + glycine + H2O = (6S)-5,6,7,8-tetrahydrofolate + L-serine. The protein operates within one-carbon metabolism; tetrahydrofolate interconversion. It functions in the pathway amino-acid biosynthesis; glycine biosynthesis; glycine from L-serine: step 1/1. Its function is as follows. Catalyzes the reversible interconversion of serine and glycine with tetrahydrofolate (THF) serving as the one-carbon carrier. This reaction serves as the major source of one-carbon groups required for the biosynthesis of purines, thymidylate, methionine, and other important biomolecules. Also exhibits THF-independent aldolase activity toward beta-hydroxyamino acids, producing glycine and aldehydes, via a retro-aldol mechanism. In Prochlorococcus marinus subsp. pastoris (strain CCMP1986 / NIES-2087 / MED4), this protein is Serine hydroxymethyltransferase.